A 205-amino-acid polypeptide reads, in one-letter code: Guanylate kinase (205 aa).

A Guanylate kinase-like domain is found at 5–184 (GLLIVLSGPS…AVQKIKGIVE (180 aa)). Residue 12–19 (GPSGVGKG) coordinates ATP.

It belongs to the guanylate kinase family.

It is found in the cytoplasm. It carries out the reaction GMP + ATP = GDP + ADP. Functionally, essential for recycling GMP and indirectly, cGMP. This chain is Guanylate kinase, found in Listeria innocua serovar 6a (strain ATCC BAA-680 / CLIP 11262).